Reading from the N-terminus, the 368-residue chain is Nuclease EXOG, mitochondrial (368 aa).

A mitochondrion-targeting transit peptide spans 1-41 (MAAKSFASRLRDSRRFLNGFLAGAVVGAAGAGLTALQFFRR). Residue His140 is the Proton acceptor of the active site. Asn171 lines the a divalent metal cation pocket.

Belongs to the DNA/RNA non-specific endonuclease family. Homodimer. A divalent metal cation serves as cofactor.

It localises to the mitochondrion inner membrane. Its function is as follows. Endo/exonuclease with nicking activity towards supercoiled DNA, a preference for single-stranded DNA and 5'-3' exonuclease activity. The chain is Nuclease EXOG, mitochondrial (Exog) from Mus musculus (Mouse).